Consider the following 159-residue polypeptide: Peptide deformylase (159 aa).

The Fe cation site is built by C88 and H130. Residue E131 is part of the active site. Fe cation is bound at residue H134.

Belongs to the polypeptide deformylase family. The cofactor is Fe(2+).

It carries out the reaction N-terminal N-formyl-L-methionyl-[peptide] + H2O = N-terminal L-methionyl-[peptide] + formate. In terms of biological role, removes the formyl group from the N-terminal Met of newly synthesized proteins. Requires at least a dipeptide for an efficient rate of reaction. N-terminal L-methionine is a prerequisite for activity but the enzyme has broad specificity at other positions. The sequence is that of Peptide deformylase from Thermoanaerobacter pseudethanolicus (strain ATCC 33223 / 39E) (Clostridium thermohydrosulfuricum).